Reading from the N-terminus, the 600-residue chain is Putative DNA 3'-5' helicase Rad25 (600 aa).

The Helicase ATP-binding domain maps to 253–402 (VDRFEDASAG…DIYTLVGRPI (150 aa)). 266 to 273 (GPPGSGKT) provides a ligand contact to ATP. A DEAH box motif is present at residues 356–359 (DEVH). Residues 457–600 (EIEHLVDQHG…VTESDASHSP (144 aa)) form the Helicase C-terminal domain. The disordered stretch occupies residues 569–600 (RGTEEEDHARSRMRHLSTKGVRVTESDASHSP). Basic and acidic residues predominate over residues 590-600 (RVTESDASHSP).

This sequence belongs to the helicase family. RAD25/XPB subfamily.

The catalysed reaction is Couples ATP hydrolysis with the unwinding of duplex DNA by translocating in the 3'-5' direction.. The enzyme catalyses ATP + H2O = ADP + phosphate + H(+). The sequence is that of Putative DNA 3'-5' helicase Rad25 from Halobacterium salinarum (strain ATCC 700922 / JCM 11081 / NRC-1) (Halobacterium halobium).